The chain runs to 271 residues: Thiazole synthase (271 aa).

Lys-108 functions as the Schiff-base intermediate with DXP in the catalytic mechanism. 1-deoxy-D-xylulose 5-phosphate contacts are provided by residues Gly-169, 195-196 (AG), and 217-218 (NS).

Belongs to the ThiG family. As to quaternary structure, homotetramer. Forms heterodimers with either ThiH or ThiS.

The protein localises to the cytoplasm. It carries out the reaction [ThiS sulfur-carrier protein]-C-terminal-Gly-aminoethanethioate + 2-iminoacetate + 1-deoxy-D-xylulose 5-phosphate = [ThiS sulfur-carrier protein]-C-terminal Gly-Gly + 2-[(2R,5Z)-2-carboxy-4-methylthiazol-5(2H)-ylidene]ethyl phosphate + 2 H2O + H(+). The protein operates within cofactor biosynthesis; thiamine diphosphate biosynthesis. Functionally, catalyzes the rearrangement of 1-deoxy-D-xylulose 5-phosphate (DXP) to produce the thiazole phosphate moiety of thiamine. Sulfur is provided by the thiocarboxylate moiety of the carrier protein ThiS. In vitro, sulfur can be provided by H(2)S. The sequence is that of Thiazole synthase from Prochlorococcus marinus (strain SARG / CCMP1375 / SS120).